We begin with the raw amino-acid sequence, 367 residues long: MMLRTEEMILNVGPQHPSTHGVFRLILKIDGEIIQEATPVIGYLHRGTEKIAEGLQYTQIIPYTDRMDYLSAMTNNYVLCHAVETMMGIEVPERAEYLRVLAMELGRIASHLVWWGTYLLDLGATSPFLYAFREREMIINLLNELSGARLTFNYMRIGGVKWDAPDGWIDKVKQFVPYMREKLHGYHELVTGNEIFRQRVTGVGRYTKEEAISYSLSGVNLRSTGVKWDLRKDEPYSIYDRFDFDVPVREGGDCLARYECRMAEIEQSLRIIEQACEQFPPEGPIMGKVPRIIKAPPGETFVRIEAPRGEIGCYIASDGKKEPYRLKFRRPSFYNLQILPKLLKGENLANVIAILGSIDIVLGEVDG.

Belongs to the complex I 49 kDa subunit family. As to quaternary structure, NDH-1 is composed of 14 different subunits. Subunits NuoB, C, D, E, F, and G constitute the peripheral sector of the complex.

The protein localises to the cell membrane. It carries out the reaction a quinone + NADH + 5 H(+)(in) = a quinol + NAD(+) + 4 H(+)(out). In terms of biological role, NDH-1 shuttles electrons from NADH, via FMN and iron-sulfur (Fe-S) centers, to quinones in the respiratory chain. The immediate electron acceptor for the enzyme in this species is believed to be a menaquinone. Couples the redox reaction to proton translocation (for every two electrons transferred, four hydrogen ions are translocated across the cytoplasmic membrane), and thus conserves the redox energy in a proton gradient. This is NADH-quinone oxidoreductase subunit D from Geobacillus kaustophilus (strain HTA426).